A 457-amino-acid chain; its full sequence is Transmembrane protein 143 (457 aa).

Transmembrane regions (helical) follow at residues Ile264 to Val284 and Leu285 to Leu305. Ser316 carries the post-translational modification Phosphoserine. Over residues Leu429–Asp439 the composition is skewed to polar residues. The interval Leu429–Asn457 is disordered.

The protein localises to the membrane. This chain is Transmembrane protein 143 (TMEM143), found in Bos taurus (Bovine).